The chain runs to 160 residues: Probable dihydroneopterin aldolase 3 (160 aa).

Substrate-binding positions include Glu59, Phe91, and 110–111 (YE). The active-site Proton donor/acceptor is Lys137.

It belongs to the DHNA family. In terms of assembly, homooctamer. Forms a hollow cylinder assembled from two ring-shaped tetramers. Expressed at very low levels in siliques.

It carries out the reaction 7,8-dihydroneopterin = 6-hydroxymethyl-7,8-dihydropterin + glycolaldehyde. Its pathway is cofactor biosynthesis; tetrahydrofolate biosynthesis; 2-amino-4-hydroxy-6-hydroxymethyl-7,8-dihydropteridine diphosphate from 7,8-dihydroneopterin triphosphate: step 3/4. Its function is as follows. Catalyzes the conversion of 7,8-dihydroneopterin into 6-hydroxymethyl-7,8-dihydropterin, a biosynthetic precursor of the vitamin tetrahydrofolate. Can use L-threo-dihydroneopterin and D-erythro-dihydroneopterin as substrates for the formation of 6-hydroxymethyldihydropterin, but it can also catalyze the epimerization of carbon 2' of dihydroneopterin and dihydromonapterin. This chain is Probable dihydroneopterin aldolase 3, found in Arabidopsis thaliana (Mouse-ear cress).